The sequence spans 149 residues: SsrA-binding protein (149 aa).

The protein belongs to the SmpB family.

Its subcellular location is the cytoplasm. In terms of biological role, required for rescue of stalled ribosomes mediated by trans-translation. Binds to transfer-messenger RNA (tmRNA), required for stable association of tmRNA with ribosomes. tmRNA and SmpB together mimic tRNA shape, replacing the anticodon stem-loop with SmpB. tmRNA is encoded by the ssrA gene; the 2 termini fold to resemble tRNA(Ala) and it encodes a 'tag peptide', a short internal open reading frame. During trans-translation Ala-aminoacylated tmRNA acts like a tRNA, entering the A-site of stalled ribosomes, displacing the stalled mRNA. The ribosome then switches to translate the ORF on the tmRNA; the nascent peptide is terminated with the 'tag peptide' encoded by the tmRNA and targeted for degradation. The ribosome is freed to recommence translation, which seems to be the essential function of trans-translation. In Anaplasma marginale (strain Florida), this protein is SsrA-binding protein.